The chain runs to 341 residues: MKVALIGITGYGGMVLYQMLKTHPGIDQVDLYARHLAGPTPLNQLVPNLFDDQPVYPYDSQKILANDGAVFFATPAGVTKTAARPYLTAHFPVIDLSGDYRLKNGATYEKWYHQSPAATADLKVAHYGLTDFCDATDENLIANPGCYATATLLGLAPLIIDQLIDLDTIVVDAKSGTSGAGKKPTSSTHFTQVNENAQLYNVNHHKHIPEIVQQLQAWDPAVDAIQFSTTLLPITRGILATIYAKPKPGVNKDQVVAAFKQTYATDPFVRYTGENLPTIKQVVGTNYCDLGVLFNERANTIMVASVIDNLIKGAGGQAIQNFNQRFNFAPTAGLPTAPLLP.

Cys-146 is an active-site residue.

This sequence belongs to the NAGSA dehydrogenase family. Type 1 subfamily.

The protein localises to the cytoplasm. The enzyme catalyses N-acetyl-L-glutamate 5-semialdehyde + phosphate + NADP(+) = N-acetyl-L-glutamyl 5-phosphate + NADPH + H(+). It participates in amino-acid biosynthesis; L-arginine biosynthesis; N(2)-acetyl-L-ornithine from L-glutamate: step 3/4. Functionally, catalyzes the NADPH-dependent reduction of N-acetyl-5-glutamyl phosphate to yield N-acetyl-L-glutamate 5-semialdehyde. This chain is N-acetyl-gamma-glutamyl-phosphate reductase, found in Limosilactobacillus fermentum (strain NBRC 3956 / LMG 18251) (Lactobacillus fermentum).